A 194-amino-acid chain; its full sequence is Leucyl/phenylalanyl-tRNA--protein transferase (194 aa).

The protein belongs to the L/F-transferase family.

The protein localises to the cytoplasm. The enzyme catalyses N-terminal L-lysyl-[protein] + L-leucyl-tRNA(Leu) = N-terminal L-leucyl-L-lysyl-[protein] + tRNA(Leu) + H(+). It catalyses the reaction N-terminal L-arginyl-[protein] + L-leucyl-tRNA(Leu) = N-terminal L-leucyl-L-arginyl-[protein] + tRNA(Leu) + H(+). The catalysed reaction is L-phenylalanyl-tRNA(Phe) + an N-terminal L-alpha-aminoacyl-[protein] = an N-terminal L-phenylalanyl-L-alpha-aminoacyl-[protein] + tRNA(Phe). Its function is as follows. Functions in the N-end rule pathway of protein degradation where it conjugates Leu, Phe and, less efficiently, Met from aminoacyl-tRNAs to the N-termini of proteins containing an N-terminal arginine or lysine. The protein is Leucyl/phenylalanyl-tRNA--protein transferase of Pelodictyon phaeoclathratiforme (strain DSM 5477 / BU-1).